The sequence spans 142 residues: Holo-[acyl-carrier-protein] synthase (142 aa).

Positions 9 and 63 each coordinate Mg(2+).

This sequence belongs to the P-Pant transferase superfamily. AcpS family. It depends on Mg(2+) as a cofactor.

Its subcellular location is the cytoplasm. The catalysed reaction is apo-[ACP] + CoA = holo-[ACP] + adenosine 3',5'-bisphosphate + H(+). Functionally, transfers the 4'-phosphopantetheine moiety from coenzyme A to a Ser of acyl-carrier-protein. The protein is Holo-[acyl-carrier-protein] synthase of Burkholderia lata (strain ATCC 17760 / DSM 23089 / LMG 22485 / NCIMB 9086 / R18194 / 383).